Here is a 543-residue protein sequence, read N- to C-terminus: Carboxypeptidase Y homolog A (543 aa).

The first 17 residues, 1–17 (MRVLPATLLVGAATAAA), serve as a signal peptide directing secretion. A propeptide spanning residues 18-124 (PPFQQILGLP…KLEAYDLRVK (107 aa)) is cleaved from the precursor. Disulfide bonds link C179-C419, C313-C327, C337-C360, C344-C353, and C382-C389. N210 is a glycosylation site (N-linked (GlcNAc...) asparagine). S266 is an active-site residue. The active site involves D458. A glycan (N-linked (GlcNAc...) asparagine) is linked at N509. Residue H520 is part of the active site.

Belongs to the peptidase S10 family.

It is found in the vacuole. It catalyses the reaction Release of a C-terminal amino acid with broad specificity.. Its function is as follows. Vacuolar carboxypeptidase involved in degradation of small peptides. Digests preferentially peptides containing an aliphatic or hydrophobic residue in P1' position, as well as methionine, leucine or phenylalanine in P1 position of ester substrate. The protein is Carboxypeptidase Y homolog A (cpyA) of Neosartorya fischeri (strain ATCC 1020 / DSM 3700 / CBS 544.65 / FGSC A1164 / JCM 1740 / NRRL 181 / WB 181) (Aspergillus fischerianus).